A 649-amino-acid chain; its full sequence is Acetylcholinesterase (649 aa).

The signal sequence occupies residues 1-38 (MAISCRQSRVLPMSLPLPLTIPLPLVLVLSLHLSGVCG). The cysteines at positions 104 and 131 are disulfide-linked. 2 N-linked (GlcNAc...) asparagine glycosylation sites follow: N126 and N174. The active-site Acyl-ester intermediate is the S276. C330 and C345 form a disulfide bridge. N331 is a glycosylation site (N-linked (GlcNAc...) asparagine). Residues E405 and H518 each act as charge relay system in the active site. C480 and C598 are oxidised to a cystine. N531 carries an N-linked (GlcNAc...) asparagine glycan. S619 is lipidated: GPI-anchor amidated serine. Positions 620 to 649 (GSASISPRLQLLGIAALIYICAALRTKRVF) are cleaved as a propeptide — removed in mature form.

It belongs to the type-B carboxylesterase/lipase family. In terms of assembly, homodimer; disulfide-linked. The active unit is formed by non-covalent association of the 55 kDa and 16 kDa subunits. Post-translationally, proteolytic cleavage into the 16 kDa subunit and the 55 kDa subunits originates from the hydrophilic peptide, aa 148-180, and is associated with excretion out of the cell. In terms of processing, neither N-glycosylation nor dimerization is required for enzyme activity or substrate specificity, but protects the protein against proteolytic digestion.

It localises to the synapse. The protein resides in the cell membrane. It carries out the reaction acetylcholine + H2O = choline + acetate + H(+). Its function is as follows. Rapidly hydrolyzes choline released into the synapse. It can hydrolyze butyrylthiocholine. The protein is Acetylcholinesterase (Ace) of Drosophila melanogaster (Fruit fly).